The following is a 461-amino-acid chain: Isthmin-1 (461 aa).

The first 26 residues, 1–26, serve as a signal peptide directing secretion; that stretch reads MVRLAAELLLLLGLLLLTLHITVLRS. A glycan (N-linked (GlcNAc...) asparagine) is linked at N33. Over residues 40–58 the composition is skewed to polar residues; it reads QDSRVAENNVNADSSSSVQ. Disordered stretches follow at residues 40–62, 73–92, and 128–188; these read QDSR…LGPG, ASQP…RDGP, and EGSE…NFLK. Positions 131–141 are enriched in basic and acidic residues; sequence EPEKGMRKENK. Over residues 156-165 the composition is skewed to low complexity; sequence SSSSSSSSVS. A TSP type-1 domain is found at 215–259; that stretch reads DGEGDWSAWSPCSVSCGNGNQKRTRSCGYACTATESRTCDMPSCP. 3 cysteine pairs are disulfide-bonded: C226/C253, C230/C258, and C241/C245. N-linked (GlcNAc...) asparagine glycosylation is present at N282. The region spanning 286–449 is the AMOP domain; that stretch reads LFGVDTDSCE…QKCAENPQDE (164 aa).

This sequence belongs to the isthmin family.

The protein localises to the secreted. Its function is as follows. May specifically influence certain angiogenesis process. The chain is Isthmin-1 (ism1) from Danio rerio (Zebrafish).